The chain runs to 228 residues: Triosephosphate isomerase (228 aa).

11 to 13 (NFK) serves as a coordination point for substrate. Histidine 95 functions as the Electrophile in the catalytic mechanism. Catalysis depends on glutamate 143, which acts as the Proton acceptor. Substrate is bound by residues isoleucine 148, glycine 183, and 204 to 205 (AS).

This sequence belongs to the triosephosphate isomerase family. Homotetramer; dimer of dimers.

Its subcellular location is the cytoplasm. The enzyme catalyses D-glyceraldehyde 3-phosphate = dihydroxyacetone phosphate. The protein operates within carbohydrate biosynthesis; gluconeogenesis. Its pathway is carbohydrate degradation; glycolysis; D-glyceraldehyde 3-phosphate from glycerone phosphate: step 1/1. Functionally, involved in the gluconeogenesis. Catalyzes stereospecifically the conversion of dihydroxyacetone phosphate (DHAP) to D-glyceraldehyde-3-phosphate (G3P). The protein is Triosephosphate isomerase of Pyrococcus abyssi (strain GE5 / Orsay).